A 288-amino-acid chain; its full sequence is uncharacterized protein (288 aa).

This is an uncharacterized protein from Acanthamoeba polyphaga mimivirus (APMV).